Here is a 486-residue protein sequence, read N- to C-terminus: NGFI-A-binding protein 1 (486 aa).

Residues 4–82 (ALPRTLGELQ…RDWVTNPGLF (79 aa)) are NCD1. Glycyl lysine isopeptide (Lys-Gly) (interchain with G-Cter in SUMO2) cross-links involve residues K126, K129, and K143. Residues 160-187 (WQGHHATESEHSLSPADLGSPASPKESS) are disordered. S171 and S182 each carry phosphoserine. Residue K211 forms a Glycyl lysine isopeptide (Lys-Gly) (interchain with G-Cter in SUMO2) linkage. Positions 220-309 (LLKNNKKLAK…ARQVSREVTY (90 aa)) are NCD2. Residues 306–337 (EVTYKYTYRTTRLKCGERDELSPKRIKIEDGF) form a necessary for nuclear localization region. S327 carries the phosphoserine modification. Residue K332 forms a Glycyl lysine isopeptide (Lys-Gly) (interchain with G-Cter in SUMO1); alternate linkage. K332 participates in a covalent cross-link: Glycyl lysine isopeptide (Lys-Gly) (interchain with G-Cter in SUMO2); alternate. Glycyl lysine isopeptide (Lys-Gly) (interchain with G-Cter in SUMO2) cross-links involve residues K354, K368, and K372. The disordered stretch occupies residues 398–438 (RQSSGEQSPDGGLPSDSSDGQGERPLNLRIPSVQNRQPHHF). Positions 404-417 (QSPDGGLPSDSSDG) are enriched in low complexity. Position 405 is a phosphoserine (S405). Glycyl lysine isopeptide (Lys-Gly) (interchain with G-Cter in SUMO2) cross-links involve residues K453, K464, and K476. Residue K479 forms a Glycyl lysine isopeptide (Lys-Gly) (interchain with G-Cter in SUMO1); alternate linkage. K479 participates in a covalent cross-link: Glycyl lysine isopeptide (Lys-Gly) (interchain with G-Cter in SUMO2); alternate.

This sequence belongs to the NAB family. As to quaternary structure, homomultimers may associate with EGR1 bound to DNA. In terms of tissue distribution, widely expressed in adult. In day 16 embryo highest levels in forebrain, thymus, salivary gland and cartilage.

The protein resides in the nucleus. Its function is as follows. Acts as a transcriptional repressor for zinc finger transcription factors EGR1 and EGR2. The polypeptide is NGFI-A-binding protein 1 (Nab1) (Mus musculus (Mouse)).